The primary structure comprises 105 residues: Met repressor (105 aa).

It belongs to the MetJ family. As to quaternary structure, homodimer.

The protein resides in the cytoplasm. This regulatory protein, when combined with SAM (S-adenosylmethionine) represses the expression of the methionine regulon and of enzymes involved in SAM synthesis. In Actinobacillus pleuropneumoniae serotype 7 (strain AP76), this protein is Met repressor.